We begin with the raw amino-acid sequence, 253 residues long: Testis-expressed protein 47 (253 aa).

Testis-specific.

This is Testis-expressed protein 47 from Homo sapiens (Human).